Here is a 90-residue protein sequence, read N- to C-terminus: U7-theraphotoxin-Hhn1a 1 (90 aa).

The first 19 residues, 1-19 (MKTAIFTVVLALAVFAVLS), serve as a signal peptide directing secretion. Positions 20 to 50 (FGWEANEKALSEEFTELIHEKEAASETEARE) are excised as a propeptide. 3 cysteine pairs are disulfide-bonded: C51/C65, C58/C70, and C64/C81.

The protein belongs to the neurotoxin 10 (Hwtx-1) family. 13 (Hntx-13) subfamily. As to expression, expressed by the venom gland.

It is found in the secreted. Its function is as follows. Ion channel inhibitor. The polypeptide is U7-theraphotoxin-Hhn1a 1 (Cyriopagopus hainanus (Chinese bird spider)).